The following is a 301-amino-acid chain: MSGRLDVLLVTGMSGAGKSTSLRVLEDLGWETLDNFPIRLLEPMIGEVLSSDNPAPLAVGFDSRTRGFVPNEIIELCKRLVQRDDLTLTTLFLDCTSEELERRFNETRRHHPMARGRTALEGIRAEREVMEPLRRWAEAVIDTSELAANELQQLIREQFHHDDPASQSVTVSSFGFARGMPPLADLVFDMRFLDNPHWVANLREQTGLDPAVGEYITARGDFDEIFQRMRDLILALLPRYRAQGKAYVHVAFGCTGGRHRSVFTAETMAQALREAGFSPTVVHRNLASRAADQFEGPQGRN.

ATP is bound at residue glycine 12–serine 19. Position 62 to 65 (aspartate 62 to threonine 65) interacts with GTP.

This sequence belongs to the RapZ-like family.

Its function is as follows. Displays ATPase and GTPase activities. The polypeptide is Nucleotide-binding protein ELI_02120 (Erythrobacter litoralis (strain HTCC2594)).